Reading from the N-terminus, the 41-residue chain is Large ribosomal subunit protein bL36 (41 aa).

The protein belongs to the bacterial ribosomal protein bL36 family.

The polypeptide is Large ribosomal subunit protein bL36 (Rickettsia africae (strain ESF-5)).